A 245-amino-acid polypeptide reads, in one-letter code: MTKIFAHRGFKGNYPENTMIAFEHALHSGADGIELDVQLTKDGRLAVIHDEKLNRTTNMKGLVKDYTYEELKRGDASHSFYEETGAVTIPLLEEVLELVTQRSSFMINIELKNSIYRYPGIEEKVKEQIEHFQIEDRVLVSSFHHGSLALFHKLMPHIELAVLTMDVIHQPDMYLKTIPAKGYHPNIKGAGVTKEVVSALHADQQVIRPFTVNSEKQIKNMLTLGVDGIFTDFPDRAVKIREEMK.

Residues 2–241 (TKIFAHRGFK…DFPDRAVKIR (240 aa)) enclose the GP-PDE domain. His-7 functions as the Proton acceptor in the catalytic mechanism. The a divalent metal cation site is built by Glu-34 and Asp-36. His-49 functions as the Proton donor in the catalytic mechanism. Residue Glu-110 coordinates a divalent metal cation.

It belongs to the glycerophosphoryl diester phosphodiesterase family. Ni(2+) serves as cofactor. The cofactor is Co(2+). It depends on Mn(2+) as a cofactor.

The catalysed reaction is a sn-glycero-3-phosphodiester + H2O = an alcohol + sn-glycerol 3-phosphate + H(+). Inhibited by EDTA and various organic solvents such as chloroform, toluene or benzene. Glycerophosphodiester phosphodiesterase hydrolyzes glycerophosphodiesters into glycerol-3-phosphate (G3P) and the corresponding alcohol. Can hydrolyze the model substrate bis-(p-nitrophenyl phosphate) (bis(pNPP)) to p-nitrophenol. Can also catalyze the degradation of diphenyl phosphate (DPHP) to phenyl phosphate (PHP). DPHP is an aryl phosphate ester used as a chemical additive and an industrial catalyst that can easily spread to the environment and exhibits toxicity toward organisms. The polypeptide is Glycerophosphodiester phosphodiesterase (Bacillus altitudinis).